Consider the following 622-residue polypeptide: DNA mismatch repair protein MutL (622 aa).

It belongs to the DNA mismatch repair MutL/HexB family.

Its function is as follows. This protein is involved in the repair of mismatches in DNA. It is required for dam-dependent methyl-directed DNA mismatch repair. May act as a 'molecular matchmaker', a protein that promotes the formation of a stable complex between two or more DNA-binding proteins in an ATP-dependent manner without itself being part of a final effector complex. The sequence is that of DNA mismatch repair protein MutL from Actinobacillus pleuropneumoniae serotype 3 (strain JL03).